Reading from the N-terminus, the 328-residue chain is Arylacetonitrilase (328 aa).

One can recognise a CN hydrolase domain in the interval 5 to 278 (VRVAVTQAEP…EGIIYADLDF (274 aa)). E45 acts as the Proton acceptor in catalysis. K125 is an active-site residue. C160 acts as the Nucleophile in catalysis.

It belongs to the carbon-nitrogen hydrolase superfamily. Nitrilase family.

The enzyme catalyses a nitrile + 2 H2O = a carboxylate + NH4(+). It carries out the reaction 4-chlorophenylacetonitrile + 2 H2O = 4-chlorophenylacetate + NH4(+). Its function is as follows. Nitrilase that hydrolyzes preferentially phenylacetonitrile, (R,S)-mandelonitrile, and 3-indolylacetonitrile. This chain is Arylacetonitrilase, found in Aspergillus niger (strain ATCC MYA-4892 / CBS 513.88 / FGSC A1513).